A 222-amino-acid polypeptide reads, in one-letter code: Sugar fermentation stimulation protein homolog (222 aa).

The protein belongs to the SfsA family.

This Thermotoga petrophila (strain ATCC BAA-488 / DSM 13995 / JCM 10881 / RKU-1) protein is Sugar fermentation stimulation protein homolog.